Here is a 588-residue protein sequence, read N- to C-terminus: Adenine deaminase (588 aa).

The protein belongs to the metallo-dependent hydrolases superfamily. Adenine deaminase family. As to quaternary structure, homodimer. The cofactor is Mn(2+).

It catalyses the reaction adenine + H2O + H(+) = hypoxanthine + NH4(+). The protein is Adenine deaminase of Escherichia coli O9:H4 (strain HS).